The chain runs to 74 residues: Omega-conotoxin-like protein 1 (74 aa).

Residues methionine 1–alanine 20 form the signal peptide. Intrachain disulfides connect cysteine 24–cysteine 38, cysteine 31–cysteine 43, and cysteine 37–cysteine 50.

As to expression, highly expressed in brain. Is also found in hemolymph.

The impact of this protein on the neuronal activity of the honeybee brain is not known. It does not affect apparent movement or hatching of blowfly larvae. However, when injected into fish, it induces a strong reversible paralytic effect. In addition, the presence of this small peptide in the hemolymph of adult drones together with its induction after bacterial infection suggests that this peptide exhibits antibacterial activity. This peptide may act by inhibiting ion channels. The protein is Omega-conotoxin-like protein 1 of Apis mellifera (Honeybee).